We begin with the raw amino-acid sequence, 92 residues long: Small ribosomal subunit protein uS19c (92 aa).

Belongs to the universal ribosomal protein uS19 family.

The protein resides in the plastid. The protein localises to the chloroplast. Protein S19 forms a complex with S13 that binds strongly to the 16S ribosomal RNA. The sequence is that of Small ribosomal subunit protein uS19c from Gossypium barbadense (Sea Island cotton).